The following is a 101-amino-acid chain: MDPQNALYYQPRVPTAAPTSGGVPWSRVGEVAILSFVALICFYLLYLWVLRDLILVLKARQGRSTEELIFGGQAVDRSNPIPNLPAPPSQGNPGPFVPGTG.

The helical transmembrane segment at 30-50 (EVAILSFVALICFYLLYLWVL) threads the bilayer. The disordered stretch occupies residues 75–101 (VDRSNPIPNLPAPPSQGNPGPFVPGTG).

Belongs to the mastrevirus movement protein family. Interacts with the capsid protein (CP). Part of a MP-CP-viral DNA complex.

Its subcellular location is the host membrane. In terms of biological role, involved in the viral transport within, and between cells. This Maize streak virus genotype A (isolate South Africa) (MSV) protein is Movement protein.